Consider the following 86-residue polypeptide: UPF0512 protein V (86 aa).

This sequence belongs to the UPF0512 family.

This chain is UPF0512 protein V, found in Dictyostelium discoideum (Social amoeba).